A 336-amino-acid polypeptide reads, in one-letter code: Glycerol-3-phosphate dehydrogenase [NAD(P)+] (336 aa).

NADPH is bound by residues Ser-14, Trp-15, Arg-35, Arg-36, and Lys-109. Positions 109 and 139 each coordinate sn-glycerol 3-phosphate. Ala-143 lines the NADPH pocket. Lys-194, Asp-247, Ser-257, Arg-258, and Asn-259 together coordinate sn-glycerol 3-phosphate. Lys-194 acts as the Proton acceptor in catalysis. Arg-258 is a binding site for NADPH. Glu-284 is an NADPH binding site.

It belongs to the NAD-dependent glycerol-3-phosphate dehydrogenase family.

It is found in the cytoplasm. It catalyses the reaction sn-glycerol 3-phosphate + NAD(+) = dihydroxyacetone phosphate + NADH + H(+). It carries out the reaction sn-glycerol 3-phosphate + NADP(+) = dihydroxyacetone phosphate + NADPH + H(+). The protein operates within membrane lipid metabolism; glycerophospholipid metabolism. Catalyzes the reduction of the glycolytic intermediate dihydroxyacetone phosphate (DHAP) to sn-glycerol 3-phosphate (G3P), the key precursor for phospholipid synthesis. This Streptomyces griseus subsp. griseus (strain JCM 4626 / CBS 651.72 / NBRC 13350 / KCC S-0626 / ISP 5235) protein is Glycerol-3-phosphate dehydrogenase [NAD(P)+].